We begin with the raw amino-acid sequence, 313 residues long: MPKSNTKYVIDPLSVKTSCSSEESYIRCVEYGKSKAHYSSLILLAKAILAGVFVGVCAHASGIAGGLFYYHKLREYVGASMSAFVYGFTFPIAFLCIICTGSDLFTGNTLAVTTALLHGKVSCLEYVRVMCISLFGNYVGAVSFAFFVSYGSGAFHKKEQVDKNHIFQFLNDIAVKKVNHTFVECICLAIGCNIFVCLAVYFVLSIKDGSGMVFSVFFAVYAFAIAGYEHIIANIYTLNISLMIDTEVSFTQVYFKNLLPTLIGNYIAGALVLACPLFFIYRSYYINYEKMNEPSGGSLRSISIEMKNDGGAT.

Over 1 to 47 (MPKSNTKYVIDPLSVKTSCSSEESYIRCVEYGKSKAHYSSLILLAKA) the chain is Cytoplasmic. The helical transmembrane segment at 48 to 68 (ILAGVFVGVCAHASGIAGGLF) threads the bilayer. The Extracellular segment spans residues 69 to 77 (YYHKLREYV). Residues 78-98 (GASMSAFVYGFTFPIAFLCII) form a helical membrane-spanning segment. At 99–128 (CTGSDLFTGNTLAVTTALLHGKVSCLEYVR) the chain is on the cytoplasmic side. Residues 129 to 149 (VMCISLFGNYVGAVSFAFFVS) form a helical membrane-spanning segment. The Extracellular segment spans residues 150–185 (YGSGAFHKKEQVDKNHIFQFLNDIAVKKVNHTFVEC). An N-linked (GlcNAc...) asparagine glycan is attached at N179. A helical transmembrane segment spans residues 186 to 206 (ICLAIGCNIFVCLAVYFVLSI). Residues 207–211 (KDGSG) lie on the Cytoplasmic side of the membrane. A helical transmembrane segment spans residues 212–232 (MVFSVFFAVYAFAIAGYEHII). Residues 233-260 (ANIYTLNISLMIDTEVSFTQVYFKNLLP) are Extracellular-facing. N239 is a glycosylation site (N-linked (GlcNAc...) asparagine). The helical transmembrane segment at 261–281 (TLIGNYIAGALVLACPLFFIY) threads the bilayer. The Cytoplasmic portion of the chain corresponds to 282-313 (RSYYINYEKMNEPSGGSLRSISIEMKNDGGAT).

It belongs to the FNT transporter (TC 1.A.16) family. As to quaternary structure, homopentamer.

The protein resides in the cell membrane. Its subcellular location is the vacuole membrane. It catalyses the reaction (S)-lactate(in) + H(+)(in) = (S)-lactate(out) + H(+)(out). The catalysed reaction is formate(in) + H(+)(in) = formate(out) + H(+)(out). The enzyme catalyses pyruvate(out) + H(+)(out) = pyruvate(in) + H(+)(in). It carries out the reaction acetate(out) + H(+)(out) = acetate(in) + H(+)(in). With respect to regulation, inhibited by the Malaria Box compound MMV007839 and its derivatives BH296 and BH267.meta. In terms of biological role, monocarboxylate-proton symporter that mediates the efflux of the waste product lactate in the intraerythrocytic parasites; active in acidic-to-neutral pH range. Transports L-lactate. The polypeptide is Formate-nitrite transporter (Plasmodium ovale).